The sequence spans 82 residues: DNA-directed RNA polymerase subunit Rpo5 (82 aa).

The protein belongs to the archaeal Rpo5/eukaryotic RPB5 RNA polymerase subunit family. Part of the RNA polymerase complex.

The protein resides in the cytoplasm. It catalyses the reaction RNA(n) + a ribonucleoside 5'-triphosphate = RNA(n+1) + diphosphate. Its function is as follows. DNA-dependent RNA polymerase (RNAP) catalyzes the transcription of DNA into RNA using the four ribonucleoside triphosphates as substrates. The chain is DNA-directed RNA polymerase subunit Rpo5 from Thermococcus celer.